A 251-amino-acid polypeptide reads, in one-letter code: Protection of telomeres homolog 2 (251 aa).

The disordered stretch occupies residues Glu221–Gln251.

It belongs to the telombin family.

It is found in the nucleus. Its subcellular location is the chromosome. The protein resides in the telomere. In terms of biological role, telomeric DNA-binding protein, which binds to two or more single-stranded G-rich repeat sequences (G-strand), with high specificity to the 5'-TTAGGC-3' sequence. In addition, repeat sequence binding requires a 3' single-stranded telomeric overhang. Acts redundantly with pot-1 to negatively regulate telomerase-mediated telomere extension. Also regulates telomere length by the telomerase-independent telomere maintenance pathway called ALT (alternative lengthening of telomeres). Does not appear to have a role in anchoring telomeres to the nuclear envelope. The polypeptide is Protection of telomeres homolog 2 (Caenorhabditis elegans).